The primary structure comprises 1489 residues: ZEB2-regulated ABC transporter 1 (1489 aa).

The segment at 1–55 (MALPEANMSSTRSEQSSRSHDTIVGNEQPHSEKPAASAPGDQMSSDDEDEGPQTE) is disordered. N7 carries an N-linked (GlcNAc...) asparagine glycan. A compositionally biased stretch (acidic residues) spans 44–53 (SSDDEDEGPQ). N-linked (GlcNAc...) asparagine glycosylation is found at N70, N73, N118, N332, and N469. Positions 152–408 (LGLPDMVHQM…FINLGFECPD (257 aa)) constitute an ABC transporter 1 domain. 5 helical membrane passes run 513–533 (LLGS…VAFI), 552–572 (GATL…EILT), 599–619 (ILVD…TLYF), 628–648 (GAFF…SGVF), and 662–682 (MVPA…VVPV). N-linked (GlcNAc...) asparagine glycosylation occurs at N714. Residues 773–793 (GILIAMTIFNHVVYIVATEFI) traverse the membrane as a helical segment. Positions 811–834 (PSKAKSDPEASSSRPIPTTEKNNN) are disordered. Residues 819 to 834 (EASSSRPIPTTEKNNN) are compositionally biased toward polar residues. Residues 846–1088 (FHWNDVCYDI…TLTNYFVKHG (243 aa)) enclose the ABC transporter 2 domain. 882-889 (GVSGAGKT) is an ATP binding site. 5 helical membrane-spanning segments follow: residues 1190 to 1210 (ALCI…PLSL), 1218 to 1238 (FAIF…MPHF), 1269 to 1289 (IPWN…PVGF), 1307 to 1327 (WLLI…AIAI), and 1333 to 1353 (AGGN…GVLA). The N-linked (GlcNAc...) asparagine glycan is linked to N1402. A helical transmembrane segment spans residues 1457–1477 (GIGMVYIVVNIVGALFLYWLI).

It belongs to the ABC transporter superfamily. ABCG family. PDR (TC 3.A.1.205) subfamily.

The protein localises to the cell membrane. It is found in the vacuole membrane. Its function is as follows. ABC transporter involved in zearalenone production. This is ZEB2-regulated ABC transporter 1 from Gibberella zeae (strain ATCC MYA-4620 / CBS 123657 / FGSC 9075 / NRRL 31084 / PH-1) (Wheat head blight fungus).